We begin with the raw amino-acid sequence, 598 residues long: NADPH-dependent diflavin oxidoreductase 1 (598 aa).

The Flavodoxin-like domain maps to 6–150 (LLVLFGSQTG…AIDPWVGDLW (145 aa)). FMN contacts are provided by residues 12–17 (SQTGTA), 59–62 (ATTG), 97–106 (LGDSSYAKFN), and Asp-132. The FAD-binding FR-type domain maps to 206-448 (LQPFLAPVIT…VRPGSLVFPK (243 aa)). FAD contacts are provided by residues Arg-350, 382-385 (RAFS), and 416-419 (GLCS). NADP(+)-binding positions include Thr-461, 516–517 (SR), 522–526 (KVYVQ), and Asp-559. An FAD-binding site is contributed by Trp-597.

This sequence belongs to the NADPH-dependent diflavin oxidoreductase NDOR1 family. In the N-terminal section; belongs to the flavodoxin family. The protein in the C-terminal section; belongs to the flavoprotein pyridine nucleotide cytochrome reductase family. Interacts with CIAPIN1; as part of the cytosolic iron-sulfur (Fe-S) protein assembly (CIA) machinery. Interacts with DCPS. FAD is required as a cofactor. Requires FMN as cofactor.

Its subcellular location is the cytoplasm. It localises to the perinuclear region. The catalysed reaction is 2 oxidized [2Fe-2S]-[protein] + NADPH = 2 reduced [2Fe-2S]-[protein] + NADP(+) + H(+). NADPH-dependent reductase which is a central component of the cytosolic iron-sulfur (Fe-S) protein assembly (CIA) machinery. Transfers electrons from NADPH via its FAD and FMN prosthetic groups to the [2Fe-2S] cluster of CIAPIN1, another key component of the CIA machinery. In turn, this reduced cluster provides electrons for assembly of cytosolic iron-sulfur cluster proteins. It can also reduce the [2Fe-2S] cluster of CISD1 and activate this protein implicated in Fe/S cluster repair. In vitro can fully activate methionine synthase/MTR in the presence of soluble cytochrome b5/CYB5A. In Mus musculus (Mouse), this protein is NADPH-dependent diflavin oxidoreductase 1.